Reading from the N-terminus, the 195-residue chain is Dehydrin DHN1 (195 aa).

Residues 1-195 are disordered; it reads MAEYGDQYGR…IKEKLPGGHH (195 aa). The segment covering 37 to 48 has biased composition (low complexity); that stretch reads YGTTGTTVGYGT. Over residues 50 to 64 the composition is skewed to polar residues; the sequence is QCVTTVTTGAQKTDQ. Positions 65–88 are enriched in low complexity; sequence YGTPGTTGAYGTDQYGTTGTTGEY. 2 stretches are compositionally biased toward basic and acidic residues: residues 136–153 and 173–195; these read KEKIKEKLPGGGHGDDQT and SPEHEEKKGIMDKIKEKLPGGHH.

Belongs to the plant dehydrin family. Phosphorylated in vitro by CK2. Expressed in roots and leaves.

The protein resides in the cytoplasm. Its subcellular location is the nucleus. This chain is Dehydrin DHN1, found in Avicennia marina (Grey mangrove).